Consider the following 224-residue polypeptide: UPF0758 protein VCM66_0205 (224 aa).

Positions 1 to 20 are disordered; that stretch reads MSLKQLPTESMPREKLLQRG. The MPN domain occupies 102-224; that stretch reads ALTSPQQTKL…VVSFAERGWI (123 aa). Zn(2+) contacts are provided by His-173, His-175, and Asp-186. A JAMM motif motif is present at residues 173-186; the sequence is HNHPSGVAEPSQAD.

This sequence belongs to the UPF0758 family.

This is UPF0758 protein VCM66_0205 from Vibrio cholerae serotype O1 (strain M66-2).